A 231-amino-acid chain; its full sequence is MQLYSSESESDDSQYWVDWFLGLKGNEFFCEVDEDFIQDRFNLTGLSHEVPHYSQSLDLILDVLDPDLPEEVQDEVEASARHLYGLIHARYILTAQGLYKMLEKYKKCDFGHCPRVLCNGQPMLPVGLSDIAHTKSVKLYCPRCEDVYTPKSQRHASIDGAYFGTSFPHMLFQVYPELAVPKSQERYIPRIFGFKVHSYSATFKKQDVYKEKQKKRLQGAEAESKNKLAIT.

It belongs to the casein kinase 2 subunit beta family. In terms of assembly, tetramer composed of two alpha chains, one beta chain and one beta' chain. Phosphorylated by alpha subunit.

Its function is as follows. Regulatory subunit of casein kinase II/CK2. As part of the kinase complex regulates the basal catalytic activity of the alpha subunit a constitutively active serine/threonine-protein kinase that phosphorylates a large number of substrates containing acidic residues C-terminal to the phosphorylated serine or threonine. In Schizosaccharomyces pombe (strain 972 / ATCC 24843) (Fission yeast), this protein is Casein kinase II subunit beta.